Reading from the N-terminus, the 799-residue chain is DNA ligase (799 aa).

The segment covering methionine 1–aspartate 11 has biased composition (basic and acidic residues). Residues methionine 1–isoleucine 35 form a disordered region. NAD(+) is bound by residues aspartate 67–aspartate 71, serine 116–leucine 117, and aspartate 147. Lysine 149 serves as the catalytic N6-AMP-lysine intermediate. The NAD(+) site is built by arginine 170, glutamate 207, lysine 327, and lysine 351. Residues cysteine 445, cysteine 448, cysteine 463, and cysteine 468 each contribute to the Zn(2+) site. Positions alanine 634–valine 723 constitute a BRCT domain. Residues serine 720–phenylalanine 799 form a disordered region. The span at glycine 755–alanine 767 shows a compositional bias: low complexity. Basic and acidic residues predominate over residues aspartate 787 to phenylalanine 799.

The protein belongs to the NAD-dependent DNA ligase family. LigA subfamily. Mg(2+) serves as cofactor. The cofactor is Mn(2+).

It carries out the reaction NAD(+) + (deoxyribonucleotide)n-3'-hydroxyl + 5'-phospho-(deoxyribonucleotide)m = (deoxyribonucleotide)n+m + AMP + beta-nicotinamide D-nucleotide.. Its function is as follows. DNA ligase that catalyzes the formation of phosphodiester linkages between 5'-phosphoryl and 3'-hydroxyl groups in double-stranded DNA using NAD as a coenzyme and as the energy source for the reaction. It is essential for DNA replication and repair of damaged DNA. The sequence is that of DNA ligase from Nitratidesulfovibrio vulgaris (strain ATCC 29579 / DSM 644 / CCUG 34227 / NCIMB 8303 / VKM B-1760 / Hildenborough) (Desulfovibrio vulgaris).